The following is a 254-amino-acid chain: NAD-dependent protein deacylase (254 aa).

The region spanning 1–250 (MERLEEARKR…LPPSPEDQAE (250 aa)) is the Deacetylase sirtuin-type domain. 22-41 (GAGISKPSGIPTFRDAEGLW) contacts NAD(+). Positions 66 and 69 each coordinate substrate. 104 to 107 (QNVD) provides a ligand contact to NAD(+). The active-site Proton acceptor is histidine 122. Residues cysteine 130, cysteine 133, cysteine 149, and cysteine 152 each contribute to the Zn(2+) site. NAD(+)-binding positions include 189–191 (GTS), 215–217 (NPE), and alanine 233.

It belongs to the sirtuin family. Class III subfamily. It depends on Zn(2+) as a cofactor.

The protein localises to the cytoplasm. It carries out the reaction N(6)-acetyl-L-lysyl-[protein] + NAD(+) + H2O = 2''-O-acetyl-ADP-D-ribose + nicotinamide + L-lysyl-[protein]. The enzyme catalyses N(6)-succinyl-L-lysyl-[protein] + NAD(+) + H2O = 2''-O-succinyl-ADP-D-ribose + nicotinamide + L-lysyl-[protein]. In terms of biological role, NAD-dependent lysine deacetylase and desuccinylase that specifically removes acetyl and succinyl groups on target proteins. Modulates the activities of several proteins which are inactive in their acylated form. The chain is NAD-dependent protein deacylase from Thermus thermophilus (strain ATCC 27634 / DSM 579 / HB8).